Here is a 105-residue protein sequence, read N- to C-terminus: DNA-directed RNA polymerase subunit omega (105 aa).

The protein belongs to the RNA polymerase subunit omega family. In terms of assembly, the RNAP catalytic core consists of 2 alpha, 1 beta, 1 beta' and 1 omega subunit. When a sigma factor is associated with the core the holoenzyme is formed, which can initiate transcription.

The catalysed reaction is RNA(n) + a ribonucleoside 5'-triphosphate = RNA(n+1) + diphosphate. Its function is as follows. Promotes RNA polymerase assembly. Latches the N- and C-terminal regions of the beta' subunit thereby facilitating its interaction with the beta and alpha subunits. This chain is DNA-directed RNA polymerase subunit omega, found in Streptococcus equi subsp. equi (strain 4047).